The following is a 106-amino-acid chain: UPF0145 protein CKL_2433 (106 aa).

This sequence belongs to the UPF0145 family.

The sequence is that of UPF0145 protein CKL_2433 from Clostridium kluyveri (strain ATCC 8527 / DSM 555 / NBRC 12016 / NCIMB 10680 / K1).